A 261-amino-acid polypeptide reads, in one-letter code: Cytochrome c oxidase subunit 3 (261 aa).

Residues 1 to 15 (MTHQTHAYHMVNPSP) are Mitochondrial matrix-facing. A helical transmembrane segment spans residues 16-34 (WPLTGALSALLMTSGLIMW). The Mitochondrial intermembrane segment spans residues 35-40 (FHFNST). Residues 41–66 (TLLMLGLTTNMLTMYQWWRDVVREST) form a helical membrane-spanning segment. The Mitochondrial matrix segment spans residues 67-72 (FQGHHT). The helical transmembrane segment at 73–105 (PNVQKGLRYGMILFIISEVLFFTGFFWAFYHSS) threads the bilayer. Residues 106–128 (LAPTPELGGCWPPTGINPLNPLE) are Mitochondrial intermembrane-facing. The chain crosses the membrane as a helical span at residues 129–152 (VPLLNTSVLLASGVSITWAHHSLM). The Mitochondrial matrix portion of the chain corresponds to 153 to 155 (EGN). A helical transmembrane segment spans residues 156 to 183 (RNHMLQALFITIALGVYFTLLQASEYYE). Residues 184 to 190 (APFTISD) are Mitochondrial intermembrane-facing. A helical transmembrane segment spans residues 191-223 (GVYGSTFFVATGFHGLHVIIGSTFLIVCFFRQL). The Mitochondrial matrix portion of the chain corresponds to 224 to 232 (KFHFTSNHH). A helical transmembrane segment spans residues 233–256 (FGFEAAAWYWHFVDVVWLFLYVSI). Residues 257–261 (YWWGS) are Mitochondrial intermembrane-facing.

The protein belongs to the cytochrome c oxidase subunit 3 family. Component of the cytochrome c oxidase (complex IV, CIV), a multisubunit enzyme composed of 14 subunits. The complex is composed of a catalytic core of 3 subunits MT-CO1, MT-CO2 and MT-CO3, encoded in the mitochondrial DNA, and 11 supernumerary subunits COX4I, COX5A, COX5B, COX6A, COX6B, COX6C, COX7A, COX7B, COX7C, COX8 and NDUFA4, which are encoded in the nuclear genome. The complex exists as a monomer or a dimer and forms supercomplexes (SCs) in the inner mitochondrial membrane with NADH-ubiquinone oxidoreductase (complex I, CI) and ubiquinol-cytochrome c oxidoreductase (cytochrome b-c1 complex, complex III, CIII), resulting in different assemblies (supercomplex SCI(1)III(2)IV(1) and megacomplex MCI(2)III(2)IV(2)).

It is found in the mitochondrion inner membrane. It catalyses the reaction 4 Fe(II)-[cytochrome c] + O2 + 8 H(+)(in) = 4 Fe(III)-[cytochrome c] + 2 H2O + 4 H(+)(out). Functionally, component of the cytochrome c oxidase, the last enzyme in the mitochondrial electron transport chain which drives oxidative phosphorylation. The respiratory chain contains 3 multisubunit complexes succinate dehydrogenase (complex II, CII), ubiquinol-cytochrome c oxidoreductase (cytochrome b-c1 complex, complex III, CIII) and cytochrome c oxidase (complex IV, CIV), that cooperate to transfer electrons derived from NADH and succinate to molecular oxygen, creating an electrochemical gradient over the inner membrane that drives transmembrane transport and the ATP synthase. Cytochrome c oxidase is the component of the respiratory chain that catalyzes the reduction of oxygen to water. Electrons originating from reduced cytochrome c in the intermembrane space (IMS) are transferred via the dinuclear copper A center (CU(A)) of subunit 2 and heme A of subunit 1 to the active site in subunit 1, a binuclear center (BNC) formed by heme A3 and copper B (CU(B)). The BNC reduces molecular oxygen to 2 water molecules using 4 electrons from cytochrome c in the IMS and 4 protons from the mitochondrial matrix. This Gazella leptoceros (Sand gazelle) protein is Cytochrome c oxidase subunit 3 (MT-CO3).